Reading from the N-terminus, the 374-residue chain is Biotin synthase (374 aa).

The region spanning 49–276 (NEVQVSTLLS…KSHVRLSAGR (228 aa)) is the Radical SAM core domain. Cys64, Cys68, and Cys71 together coordinate [4Fe-4S] cluster. The [2Fe-2S] cluster site is built by Cys108, Cys139, Cys199, and Arg271. The tract at residues 344-374 (QQQEQAEGSNDLFIDATKPKVAAKQQHATEA) is disordered.

The protein belongs to the radical SAM superfamily. Biotin synthase family. As to quaternary structure, homodimer. The cofactor is [4Fe-4S] cluster. It depends on [2Fe-2S] cluster as a cofactor.

The enzyme catalyses (4R,5S)-dethiobiotin + (sulfur carrier)-SH + 2 reduced [2Fe-2S]-[ferredoxin] + 2 S-adenosyl-L-methionine = (sulfur carrier)-H + biotin + 2 5'-deoxyadenosine + 2 L-methionine + 2 oxidized [2Fe-2S]-[ferredoxin]. Its pathway is cofactor biosynthesis; biotin biosynthesis; biotin from 7,8-diaminononanoate: step 2/2. Catalyzes the conversion of dethiobiotin (DTB) to biotin by the insertion of a sulfur atom into dethiobiotin via a radical-based mechanism. The polypeptide is Biotin synthase (Alteromonas mediterranea (strain DSM 17117 / CIP 110805 / LMG 28347 / Deep ecotype)).